A 406-amino-acid polypeptide reads, in one-letter code: Probable tRNA sulfurtransferase (406 aa).

The region spanning Ala62 to Asp167 is the THUMP domain. Residues Met185 to Leu186, His210 to Phe211, Arg267, Gly289, and Gln298 each bind ATP.

It belongs to the ThiI family.

The protein resides in the cytoplasm. It carries out the reaction [ThiI sulfur-carrier protein]-S-sulfanyl-L-cysteine + a uridine in tRNA + 2 reduced [2Fe-2S]-[ferredoxin] + ATP + H(+) = [ThiI sulfur-carrier protein]-L-cysteine + a 4-thiouridine in tRNA + 2 oxidized [2Fe-2S]-[ferredoxin] + AMP + diphosphate. It catalyses the reaction [ThiS sulfur-carrier protein]-C-terminal Gly-Gly-AMP + S-sulfanyl-L-cysteinyl-[cysteine desulfurase] + AH2 = [ThiS sulfur-carrier protein]-C-terminal-Gly-aminoethanethioate + L-cysteinyl-[cysteine desulfurase] + A + AMP + 2 H(+). It functions in the pathway cofactor biosynthesis; thiamine diphosphate biosynthesis. In terms of biological role, catalyzes the ATP-dependent transfer of a sulfur to tRNA to produce 4-thiouridine in position 8 of tRNAs, which functions as a near-UV photosensor. Also catalyzes the transfer of sulfur to the sulfur carrier protein ThiS, forming ThiS-thiocarboxylate. This is a step in the synthesis of thiazole, in the thiamine biosynthesis pathway. The sulfur is donated as persulfide by IscS. In Lactococcus lactis subsp. cremoris (strain MG1363), this protein is Probable tRNA sulfurtransferase.